A 153-amino-acid chain; its full sequence is Ribosome maturation factor RimP (153 aa).

It belongs to the RimP family.

The protein localises to the cytoplasm. Its function is as follows. Required for maturation of 30S ribosomal subunits. This is Ribosome maturation factor RimP from Desulforamulus reducens (strain ATCC BAA-1160 / DSM 100696 / MI-1) (Desulfotomaculum reducens).